We begin with the raw amino-acid sequence, 429 residues long: Histidine--tRNA ligase (429 aa).

This sequence belongs to the class-II aminoacyl-tRNA synthetase family. In terms of assembly, homodimer.

The protein localises to the cytoplasm. The catalysed reaction is tRNA(His) + L-histidine + ATP = L-histidyl-tRNA(His) + AMP + diphosphate + H(+). The sequence is that of Histidine--tRNA ligase from Pseudomonas paraeruginosa (strain DSM 24068 / PA7) (Pseudomonas aeruginosa (strain PA7)).